The primary structure comprises 357 residues: Probable cinnamyl alcohol dehydrogenase 2 (357 aa).

Cys-47 serves as a coordination point for Zn(2+). An NADP(+)-binding site is contributed by Ser-49. Zn(2+)-binding residues include His-69, Glu-70, Cys-100, Cys-103, Cys-106, Cys-114, and Cys-163. Residues Thr-167, 188–193, 211–216, Thr-251, Gly-275, and 298–300 contribute to the NADP(+) site; these read GLGGVG, SSSNKK, and SFI.

This sequence belongs to the zinc-containing alcohol dehydrogenase family. As to quaternary structure, homodimer. Zn(2+) serves as cofactor. In terms of processing, the N-terminus is blocked.

It catalyses the reaction (E)-cinnamyl alcohol + NADP(+) = (E)-cinnamaldehyde + NADPH + H(+). The enzyme catalyses (E)-coniferol + NADP(+) = (E)-coniferaldehyde + NADPH + H(+). It carries out the reaction (E)-sinapyl alcohol + NADP(+) = (E)-sinapaldehyde + NADPH + H(+). The catalysed reaction is (E)-4-coumaroyl alcohol + NADP(+) = (E)-4-coumaraldehyde + NADPH + H(+). It catalyses the reaction (E)-caffeyl alcohol + NADP(+) = (E)-caffeyl aldehyde + NADPH + H(+). It participates in aromatic compound metabolism; phenylpropanoid biosynthesis. In terms of biological role, involved in lignin biosynthesis. Catalyzes the final step specific for the production of lignin monomers. Catalyzes the NADPH-dependent reduction of coniferaldehyde, 5-hydroxyconiferaldehyde, sinapaldehyde, 4-coumaraldehyde and caffeyl aldehyde to their respective alcohols. The polypeptide is Probable cinnamyl alcohol dehydrogenase 2 (CAD19) (Nicotiana tabacum (Common tobacco)).